A 152-amino-acid polypeptide reads, in one-letter code: Large ribosomal subunit protein bL9 (152 aa).

It belongs to the bacterial ribosomal protein bL9 family.

Binds to the 23S rRNA. The chain is Large ribosomal subunit protein bL9 from Prochlorococcus marinus (strain MIT 9211).